A 368-amino-acid polypeptide reads, in one-letter code: MVTGWHRPTWIEIDRAAIRENIKNEQNKLPENVDLWAVVKANAYGHGIIEVARTAKEAGAKGFCVAILDEALALREAGFQDDFILVLGATRKEDANLAAKNHISLTVFREDWLEDLTLEAPLRIHLKVDSGMGRLGIRTVEEARQIETTIASDNQLQLEGIYTHFATADQLETSYFEQQLAKFQTILTSLKNRPTYVHTANSAASLLQPQIGFDAIRFGISMYGLTPSTEIKTSLPFELKPALALYTEMVHVKELAPGDSVSYGATYTATEREWVATLPIGYADGLIRHYSGFHVLVGGELAPIIGRVCMDQTIIKLPREFQTGSKVTIIGEDNGNAITADDAAQYLDTINYEVTCLLNERIPRKYLH.

Catalysis depends on Lys40, which acts as the Proton acceptor; specific for D-alanine. Lys40 carries the post-translational modification N6-(pyridoxal phosphate)lysine. Residue Arg134 coordinates substrate. Tyr263 serves as the catalytic Proton acceptor; specific for L-alanine. Residue Met310 coordinates substrate.

It belongs to the alanine racemase family. Pyridoxal 5'-phosphate is required as a cofactor.

It catalyses the reaction L-alanine = D-alanine. The protein operates within amino-acid biosynthesis; D-alanine biosynthesis; D-alanine from L-alanine: step 1/1. Functionally, catalyzes the interconversion of L-alanine and D-alanine. May also act on other amino acids. This Listeria monocytogenes serotype 4a (strain HCC23) protein is Alanine racemase (alr).